A 428-amino-acid chain; its full sequence is Glutamate--tRNA ligase 2 (428 aa).

The 'HIGH' region signature appears at 6–16 (PSPTGDMRTEQ).

It belongs to the class-I aminoacyl-tRNA synthetase family. Glutamate--tRNA ligase type 1 subfamily. Monomer.

It is found in the cytoplasm. It catalyses the reaction tRNA(Glu) + L-glutamate + ATP = L-glutamyl-tRNA(Glu) + AMP + diphosphate. In terms of biological role, catalyzes the attachment of glutamate to tRNA(Glu) in a two-step reaction: glutamate is first activated by ATP to form Glu-AMP and then transferred to the acceptor end of tRNA(Glu). The protein is Glutamate--tRNA ligase 2 of Sulfurovum sp. (strain NBC37-1).